Consider the following 137-residue polypeptide: Crustacean hyperglycemic hormones (137 aa).

Residues 1–28 (MVSFRTMWSLVVVVVVVAASLGSSGVHG) form the signal peptide. At Gln64 the chain carries Pyrrolidone carboxylic acid. A D-phenylalanine; in form CHH-II modification is found at Phe66. 3 disulfide bridges follow: Cys70–Cys106, Cys86–Cys102, and Cys89–Cys115. Residue Val135 is modified to Valine amide.

It belongs to the arthropod CHH/MIH/GIH/VIH hormone family. Produced by the medulla terminalis X-organ in the eyestalks and transported to the sinus gland where they are stored and released.

The protein localises to the secreted. Functionally, hormone found in the sinus gland of isopods and decapods which controls the blood sugar level. Has a secretagogue action over the amylase released from the midgut gland. May act as a stress hormone and may be involved in the control of molting and reproduction. This Procambarus clarkii (Red swamp crayfish) protein is Crustacean hyperglycemic hormones.